A 571-amino-acid chain; its full sequence is MEVERIALKYALINAIEHGGKANPKAVIGKVLGENPELRSKAREIVPIINKVVEEVNSLSLDEQKAKLMEIYPEYFEKKEEKKEEKKGLPPLPKAEKGKVVTRFAPNPDGAFHLGNARAAILSYEYAKMYGGKFILRFDDTDPKVKRPEPIFYEMIIEDLEWLGIKPDEIVYASDRLELYYKYAEELIKMGKAYVCTCKPEKFRELRDKGIPCPHRDEPVEVQLERWRKMLNGEYKEGEAVVRIKTDLNHPNPAVRDWPALRIVDNPNHPRAGNKYRVWPLYNFASAIDDHELGVTHIFRGQEHAENETRQRYIYEYFGWEYPVTVHHGRLSIEGVILSKSKTRKGIEEGKYLGWDDPRLGTIRALRRRGILPEAIKELIIEVGLKKSDATVSWDNLAAINRKLVDPIANRYFFVADPVPMEVEGAPEFIAKIPLHPDHPERGTRELRFTPGKPIYVSKDDLDLLKPGSFVRLKDLFNVEIVEVGEKIKAKFHSFEYEIARKNKWRMIHWVPEGRPCEVIIPEGDELIVRKGLLEKDANVKAGEIVQFERFGFVRIDKIEGEKVVAIYAHK.

The short motif at 106–116 (PNPDGAFHLGN) is the 'HIGH' region element.

Belongs to the class-I aminoacyl-tRNA synthetase family. Glutamate--tRNA ligase type 2 subfamily.

It is found in the cytoplasm. The enzyme catalyses tRNA(Glu) + L-glutamate + ATP = L-glutamyl-tRNA(Glu) + AMP + diphosphate. In terms of biological role, catalyzes the attachment of glutamate to tRNA(Glu) in a two-step reaction: glutamate is first activated by ATP to form Glu-AMP and then transferred to the acceptor end of tRNA(Glu). This chain is Glutamate--tRNA ligase, found in Pyrococcus abyssi (strain GE5 / Orsay).